We begin with the raw amino-acid sequence, 80 residues long: Turripeptide VI/VII-01 (80 aa).

Residues 1 to 22 (MRLQLILTITLLLTSFMGYRDA) form the signal peptide. The propeptide occupies 23–36 (AVIQGKTERSAMKM). Cystine bridges form between C48–C61, C50–C65, and C60–C70. Residues 77–80 (SSAI) constitute a propeptide that is removed on maturation.

Expressed by the venom duct.

Its subcellular location is the secreted. This chain is Turripeptide VI/VII-01, found in Gemmula speciosa (Splendid gem-turris).